The sequence spans 102 residues: Large ribosomal subunit protein uL24 (102 aa).

This sequence belongs to the universal ribosomal protein uL24 family. As to quaternary structure, part of the 50S ribosomal subunit.

In terms of biological role, one of two assembly initiator proteins, it binds directly to the 5'-end of the 23S rRNA, where it nucleates assembly of the 50S subunit. Its function is as follows. One of the proteins that surrounds the polypeptide exit tunnel on the outside of the subunit. This chain is Large ribosomal subunit protein uL24, found in Lysinibacillus sphaericus (strain C3-41).